Here is a 157-residue protein sequence, read N- to C-terminus: Putative pre-16S rRNA nuclease (157 aa).

Belongs to the YqgF nuclease family.

The protein resides in the cytoplasm. Its function is as follows. Could be a nuclease involved in processing of the 5'-end of pre-16S rRNA. The polypeptide is Putative pre-16S rRNA nuclease (Nitrosomonas eutropha (strain DSM 101675 / C91 / Nm57)).